The sequence spans 248 residues: DNA repair protein RecO (248 aa).

Belongs to the RecO family.

Its function is as follows. Involved in DNA repair and RecF pathway recombination. The chain is DNA repair protein RecO from Bacillus cytotoxicus (strain DSM 22905 / CIP 110041 / 391-98 / NVH 391-98).